The chain runs to 299 residues: Delta-9 desaturase-like 5 protein (299 aa).

The next 2 helical transmembrane spans lie at 31-51 and 55-75; these read ADII…LAPF and WEAL…ITFS. The Histidine box-1 signature appears at 77 to 82; sequence HRNLAH. A Histidine box-2 motif is present at residues 114–118; sequence HRFHH. A run of 2 helical transmembrane segments spans residues 174-194 and 199-219; these read IGFH…LPYL and GVGG…CHIW. Positions 246-250 match the Histidine box-3 motif; it reads HNNHH.

Belongs to the fatty acid desaturase type 1 family. Requires Fe cation as cofactor.

It is found in the endoplasmic reticulum membrane. It functions in the pathway lipid metabolism; polyunsaturated fatty acid biosynthesis. This chain is Delta-9 desaturase-like 5 protein, found in Arabidopsis thaliana (Mouse-ear cress).